A 59-amino-acid chain; its full sequence is uncharacterized protein (59 aa).

33-40 (GRRRVGKT) provides a ligand contact to ATP.

This is an uncharacterized protein from Methanocaldococcus jannaschii (strain ATCC 43067 / DSM 2661 / JAL-1 / JCM 10045 / NBRC 100440) (Methanococcus jannaschii).